The sequence spans 192 residues: HTH-type transcriptional regulator Hpr (192 aa).

The HTH marR-type domain maps to 12 to 156; the sequence is SIIFSHKFAQ…LLSIVRHVYG (145 aa). Positions 62-85 form a DNA-binding region, H-T-H motif; that stretch reads ISDIAKFGVMHVSTAFNFSKKLEE.

In terms of assembly, homodimer.

Functionally, negative regulator of protease production and sporulation. This is HTH-type transcriptional regulator Hpr from Halalkalibacterium halodurans (strain ATCC BAA-125 / DSM 18197 / FERM 7344 / JCM 9153 / C-125) (Bacillus halodurans).